The sequence spans 196 residues: uncharacterized protein (196 aa).

The disordered stretch occupies residues 44-80 (RSVAVPGTEGKKAQNLRQLPAARLTYPTSSSTRPSHA).

This is an uncharacterized protein from Treponema pallidum (strain Nichols).